The following is a 121-amino-acid chain: Small ribosomal subunit protein uS13 (121 aa).

The tract at residues 96–121 (PVRGQNTKNNARTRKGKAVAIAGKKK) is disordered. A compositionally biased stretch (basic residues) spans 106–121 (ARTRKGKAVAIAGKKK).

This sequence belongs to the universal ribosomal protein uS13 family. In terms of assembly, part of the 30S ribosomal subunit. Forms a loose heterodimer with protein S19. Forms two bridges to the 50S subunit in the 70S ribosome.

In terms of biological role, located at the top of the head of the 30S subunit, it contacts several helices of the 16S rRNA. In the 70S ribosome it contacts the 23S rRNA (bridge B1a) and protein L5 of the 50S subunit (bridge B1b), connecting the 2 subunits; these bridges are implicated in subunit movement. Contacts the tRNAs in the A and P-sites. This is Small ribosomal subunit protein uS13 from Streptococcus agalactiae serotype Ia (strain ATCC 27591 / A909 / CDC SS700).